Reading from the N-terminus, the 294-residue chain is MATYGQPCARPMCIPPSYADLGKAARDIFNKGFGFGLVKLDVKTKSCSGVEFSTSGSSNTDTGKVTGTLETKYKWCEYGLTFTEKWNTDNTLGTEIAIEDQICQGLKLTFDTTFSPNTGKKSGKIKSSYKRECINLGCDVDFDFAGPAIHGSAVFGYEGWLAGYQMTFDSAKSKLTRNNFAVGYRTGDFQLHTNVNDGTEFGGSIYQKVCEDLDTSVNLAWTSGTNCTRFGIAAKYQLDPTASISAKVNNSSLIGVGYTQTLRPGVKLTLSALVDGKSINAGGHKLGLALELEA.

Alanine 2 bears the N-acetylalanine mark. ATP-binding residues include lysine 23 and lysine 31. Lysine 31 is subject to N6-acetyllysine; alternate. Residue lysine 31 is modified to N6-succinyllysine; alternate. Lysine 31 participates in a covalent cross-link: Glycyl lysine isopeptide (Lys-Gly) (interchain with G-Cter in ubiquitin); alternate. 2 beta stranded membrane-spanning segments follow: residues 37–46 (LVKLDVKTKS) and 50–58 (VEFSTSGSS). A Glycyl lysine isopeptide (Lys-Gly) (interchain with G-Cter in ubiquitin) cross-link involves residue lysine 64. A beta stranded transmembrane segment spans residues 65 to 75 (VTGTLETKYKW). Tyrosine 78 is subject to Phosphotyrosine. 3 beta stranded membrane-spanning segments follow: residues 80 to 87 (LTFTEKWN), 91 to 100 (TLGTEIAIED), and 106 to 115 (LKLTFDTTFS). The residue at position 118 (threonine 118) is a Phosphothreonine. Lysine 120 carries the post-translational modification N6-acetyllysine; alternate. Lysine 120 is covalently cross-linked (Glycyl lysine isopeptide (Lys-Gly) (interchain with G-Cter in ubiquitin); alternate). A Glycyl lysine isopeptide (Lys-Gly) (interchain with G-Cter in ubiquitin) cross-link involves residue lysine 121. Transmembrane regions (beta stranded) follow at residues 122 to 131 (SGKIKSSYKR), 134 to 141 (INLGCDVD), 148 to 156 (AIHGSAVFG), and 161 to 169 (LAGYQMTFD). Lysine 172 is covalently cross-linked (Glycyl lysine isopeptide (Lys-Gly) (interchain with G-Cter in ubiquitin)). The next 6 beta stranded transmembrane spans lie at 174-186 (KLTRNNFAVGYRT), 189-196 (FQLHTNVN), 200-209 (EFGGSIYQKV), 213-222 (LDTSVNLAWT), 229-238 (RFGIAAKYQL), and 242-249 (ASISAKVN). The residue at position 251 (serine 251) is a Phosphoserine. Residues 253 to 255 (LIG) and 271 to 275 (SALVD) contribute to the NAD(+) site. Transmembrane regions (beta stranded) follow at residues 253–262 (LIGVGYTQTL) and 265–274 (GVKLTLSALV). Lysine 277 bears the N6-acetyllysine; alternate mark. Lysine 277 is covalently cross-linked (Glycyl lysine isopeptide (Lys-Gly) (interchain with G-Cter in ubiquitin); alternate). Residues 284–293 (HKLGLALELE) form a beta stranded membrane-spanning segment.

This sequence belongs to the eukaryotic mitochondrial porin family. In terms of assembly, monomer, homodimer and higher order oligomers; formation of higher order structures is necessary for scramblase activity. Interacts with ARMC12 in a TBC1D21-dependent manner. Interacts with KLC3. Interacts with SPATA33. Interacts with PPP3CC in a SPATA33-dependent manner. Post-translationally, ubiquitinated by PRKN during mitophagy, leading to its degradation and enhancement of mitophagy. Deubiquitinated by USP30.

It localises to the mitochondrion outer membrane. Its subcellular location is the membrane. The catalysed reaction is chloride(in) = chloride(out). The enzyme catalyses K(+)(in) = K(+)(out). It carries out the reaction a 1,2-diacyl-sn-glycero-3-phospho-L-serine(in) = a 1,2-diacyl-sn-glycero-3-phospho-L-serine(out). It catalyses the reaction a 1,2-diacyl-sn-glycero-3-phosphocholine(in) = a 1,2-diacyl-sn-glycero-3-phosphocholine(out). The catalysed reaction is a 1,2-diacyl-sn-glycero-3-phospho-(1D-myo-inositol)(in) = a 1,2-diacyl-sn-glycero-3-phospho-(1D-myo-inositol)(out). Non-selective voltage-gated ion channel that mediates the transport of anions and cations through the mitochondrion outer membrane and plasma membrane. The channel adopts an open conformation at zero mV and a closed conformation at both positive and negative potentials. There are two populations of channels; the main that functions in a lower open-state conductance with lower ion selectivity, that switch, in a voltage-dependent manner, from the open to a low-conducting 'closed' state and the other that has a normal ion selectivity in the typical high conductance, 'open' state. Binds various lipids, including the sphingolipid ceramide, the phospholipid phosphatidylcholine, and the sterols cholesterol and oxysterol. Binding of ceramide promotes the mitochondrial outer membrane permeabilization (MOMP) apoptotic pathway. In terms of biological role, catalyzes the scrambling of phospholipids across the outer mitochondrial membrane; the mechanism is unrelated to channel activity and is capable of translocating both anionic and zwitterionic phospholipids. This is Non-selective voltage-gated ion channel VDAC2 from Oryctolagus cuniculus (Rabbit).